A 289-amino-acid chain; its full sequence is Probable branched-chain-amino-acid aminotransferase (289 aa).

Lys-154 is subject to N6-(pyridoxal phosphate)lysine.

It belongs to the class-IV pyridoxal-phosphate-dependent aminotransferase family. Requires pyridoxal 5'-phosphate as cofactor.

It catalyses the reaction L-leucine + 2-oxoglutarate = 4-methyl-2-oxopentanoate + L-glutamate. The catalysed reaction is L-isoleucine + 2-oxoglutarate = (S)-3-methyl-2-oxopentanoate + L-glutamate. The enzyme catalyses L-valine + 2-oxoglutarate = 3-methyl-2-oxobutanoate + L-glutamate. Its pathway is amino-acid biosynthesis; L-isoleucine biosynthesis; L-isoleucine from 2-oxobutanoate: step 4/4. The protein operates within amino-acid biosynthesis; L-leucine biosynthesis; L-leucine from 3-methyl-2-oxobutanoate: step 4/4. It participates in amino-acid biosynthesis; L-valine biosynthesis; L-valine from pyruvate: step 4/4. In terms of biological role, acts on leucine, isoleucine and valine. The polypeptide is Probable branched-chain-amino-acid aminotransferase (ilvE) (Rickettsia bellii (strain RML369-C)).